The following is a 404-amino-acid chain: Cysteine desulfurase IscS (404 aa).

Pyridoxal 5'-phosphate contacts are provided by residues 75 to 76, Asn-155, Gln-183, and 203 to 205; these read AT and SGH. Lys-206 carries the N6-(pyridoxal phosphate)lysine modification. Thr-243 is a binding site for pyridoxal 5'-phosphate. The Cysteine persulfide intermediate role is filled by Cys-328. [2Fe-2S] cluster is bound at residue Cys-328.

It belongs to the class-V pyridoxal-phosphate-dependent aminotransferase family. NifS/IscS subfamily. As to quaternary structure, homodimer. Forms a heterotetramer with IscU, interacts with other sulfur acceptors. Pyridoxal 5'-phosphate is required as a cofactor.

It localises to the cytoplasm. The catalysed reaction is (sulfur carrier)-H + L-cysteine = (sulfur carrier)-SH + L-alanine. It participates in cofactor biosynthesis; iron-sulfur cluster biosynthesis. In terms of biological role, master enzyme that delivers sulfur to a number of partners involved in Fe-S cluster assembly, tRNA modification or cofactor biosynthesis. Catalyzes the removal of elemental sulfur atoms from cysteine to produce alanine. Functions as a sulfur delivery protein for Fe-S cluster synthesis onto IscU, an Fe-S scaffold assembly protein, as well as other S acceptor proteins. This chain is Cysteine desulfurase IscS, found in Mannheimia succiniciproducens (strain KCTC 0769BP / MBEL55E).